A 412-amino-acid polypeptide reads, in one-letter code: Divalent metal cation transporter MntH (412 aa).

A run of 11 helical transmembrane segments spans residues leucine 19 to alanine 39, alanine 46 to isoleucine 66, valine 94 to isoleucine 114, leucine 122 to isoleucine 142, valine 156 to glutamine 176, alanine 196 to histidine 216, isoleucine 241 to phenylalanine 261, isoleucine 290 to glycine 310, isoleucine 322 to glycine 342, isoleucine 348 to leucine 368, and alanine 392 to leucine 412.

The protein belongs to the NRAMP family.

The protein resides in the cell inner membrane. Its function is as follows. H(+)-stimulated, divalent metal cation uptake system. The polypeptide is Divalent metal cation transporter MntH (Cronobacter sakazakii (strain ATCC BAA-894) (Enterobacter sakazakii)).